Here is a 429-residue protein sequence, read N- to C-terminus: UDP-N-acetylglucosamine 1-carboxyvinyltransferase 2 (429 aa).

22–23 (KN) is a binding site for phosphoenolpyruvate. Position 93 (R93) interacts with UDP-N-acetyl-alpha-D-glucosamine. C117 functions as the Proton donor in the catalytic mechanism. Residue C117 is modified to 2-(S-cysteinyl)pyruvic acid O-phosphothioketal. UDP-N-acetyl-alpha-D-glucosamine contacts are provided by residues 122 to 126 (RPIDQ), D305, and I327.

It belongs to the EPSP synthase family. MurA subfamily.

It is found in the cytoplasm. The catalysed reaction is phosphoenolpyruvate + UDP-N-acetyl-alpha-D-glucosamine = UDP-N-acetyl-3-O-(1-carboxyvinyl)-alpha-D-glucosamine + phosphate. Its pathway is cell wall biogenesis; peptidoglycan biosynthesis. In terms of biological role, cell wall formation. Adds enolpyruvyl to UDP-N-acetylglucosamine. The polypeptide is UDP-N-acetylglucosamine 1-carboxyvinyltransferase 2 (Bacillus anthracis).